Consider the following 1400-residue polypeptide: DNA-directed RNA polymerase subunit beta' (1400 aa).

Residues C71, C73, C86, and C89 each contribute to the Zn(2+) site. Mg(2+) contacts are provided by D462, D464, and D466. Positions 811, 885, 892, and 895 each coordinate Zn(2+).

Belongs to the RNA polymerase beta' chain family. The RNAP catalytic core consists of 2 alpha, 1 beta, 1 beta' and 1 omega subunit. When a sigma factor is associated with the core the holoenzyme is formed, which can initiate transcription. It depends on Mg(2+) as a cofactor. Zn(2+) serves as cofactor.

The catalysed reaction is RNA(n) + a ribonucleoside 5'-triphosphate = RNA(n+1) + diphosphate. Functionally, DNA-dependent RNA polymerase catalyzes the transcription of DNA into RNA using the four ribonucleoside triphosphates as substrates. This chain is DNA-directed RNA polymerase subunit beta', found in Brucella anthropi (strain ATCC 49188 / DSM 6882 / CCUG 24695 / JCM 21032 / LMG 3331 / NBRC 15819 / NCTC 12168 / Alc 37) (Ochrobactrum anthropi).